The following is a 501-amino-acid chain: ATP synthase subunit alpha (501 aa).

169-176 (GDRQTGKT) contacts ATP.

This sequence belongs to the ATPase alpha/beta chains family. As to quaternary structure, F-type ATPases have 2 components, CF(1) - the catalytic core - and CF(0) - the membrane proton channel. CF(1) has five subunits: alpha(3), beta(3), gamma(1), delta(1), epsilon(1). CF(0) has three main subunits: a(1), b(2) and c(9-12). The alpha and beta chains form an alternating ring which encloses part of the gamma chain. CF(1) is attached to CF(0) by a central stalk formed by the gamma and epsilon chains, while a peripheral stalk is formed by the delta and b chains.

The protein resides in the cell membrane. It carries out the reaction ATP + H2O + 4 H(+)(in) = ADP + phosphate + 5 H(+)(out). Functionally, produces ATP from ADP in the presence of a proton gradient across the membrane. The alpha chain is a regulatory subunit. The chain is ATP synthase subunit alpha from Streptococcus pyogenes serotype M2 (strain MGAS10270).